Reading from the N-terminus, the 542-residue chain is Chaperonin GroEL 3 (542 aa).

Residues 29 to 32, 86 to 90, glycine 413, 477 to 479, and aspartate 493 each bind ATP; these read TLGP, DGTTT, and NAA.

Belongs to the chaperonin (HSP60) family. Forms a cylinder of 14 subunits composed of two heptameric rings stacked back-to-back. Interacts with the co-chaperonin GroES.

Its subcellular location is the cytoplasm. It carries out the reaction ATP + H2O + a folded polypeptide = ADP + phosphate + an unfolded polypeptide.. In terms of biological role, together with its co-chaperonin GroES, plays an essential role in assisting protein folding. The GroEL-GroES system forms a nano-cage that allows encapsulation of the non-native substrate proteins and provides a physical environment optimized to promote and accelerate protein folding. This chain is Chaperonin GroEL 3, found in Frankia alni (strain DSM 45986 / CECT 9034 / ACN14a).